The following is a 108-amino-acid chain: Thioredoxin (108 aa).

One can recognise a Thioredoxin domain in the interval 2–108 (NKIIELTDQN…LKEFLDENIN (107 aa)). An intrachain disulfide couples C32 to C35.

The protein belongs to the thioredoxin family.

In terms of biological role, participates in various redox reactions through the reversible oxidation of its active center dithiol to a disulfide and catalyzes dithiol-disulfide exchange reactions. In Buchnera aphidicola subsp. Acyrthosiphon pisum (strain APS) (Acyrthosiphon pisum symbiotic bacterium), this protein is Thioredoxin (trxA).